Here is a 1259-residue protein sequence, read N- to C-terminus: Protein flightless-1 homolog (1259 aa).

LRR repeat units follow at residues 7–32, 33–55, 56–78, 80–103, 104–126, 128–149, 150–173, 176–201, 222–245, 247–268, 269–291, 293–316, 317–339, 340–363, and 365–385; these read LPFI…VKSM, TSLR…LASL, QKLE…LSSL, NLRA…IFQL, DDLS…LENS, NMLV…LFIN, LTDL…MRRL, LQTL…VSLQ, LSNL…LYSL, NLKR…IDQW, TKLE…ICKL, KLKK…VGKL, SNLV…LCRC, GKLK…HFLT, and LEVL…PVDR. Gelsolin-like repeat units lie at residues 509–589, 628–702, 757–830, and 1170–1225; these read IPIQ…SEEF, NIRL…PEFW, DVVP…CQVF, and EKCS…RSKD.

As to expression, expressed in ventricular cardiomyocytes, where it particularly localizes to intercalated disks and costamere-like structures (at protein level).

It is found in the nucleus. The protein localises to the cytoplasm. The protein resides in the cytoskeleton. It localises to the microtubule organizing center. Its subcellular location is the centrosome. It is found in the cell junction. The protein localises to the focal adhesion. Functionally, is a regulator of actin polymerization, required for proper myofibril organization and the assembly of cardiomyocyte cell adhesion complexes. Is a regulator of the length of sarcomeric thin filaments. Regulates cytoskeletal rearrangements involved in cytokinesis and cell migration, by inhibiting Rac1-dependent paxillin phosphorylation. May play a role as coactivator in transcriptional activation by hormone-activated nuclear receptors (NR) and acts in cooperation with NCOA2 and CARM1. Involved in estrogen hormone signaling. This chain is Protein flightless-1 homolog, found in Danio rerio (Zebrafish).